We begin with the raw amino-acid sequence, 154 residues long: Cysteine-rich DPF motif domain-containing protein 1 (154 aa).

It belongs to the CDPF1 family.

The chain is Cysteine-rich DPF motif domain-containing protein 1 from Drosophila melanogaster (Fruit fly).